A 314-amino-acid polypeptide reads, in one-letter code: MGEIRSFLLVTIALMMGREIWALENSKCLLEQERLRAQVQQLETRVKQQQARIAQLMHEKEVQLLDKGQEDNFFDLGGKRQYADCSEIYNDGFKQSGFYKIKPHQSQAIFSVYCDMSDGGGWTVIQRRSDGRENFNRCWNDYENGFGNFVQNNGEYWLGNKNINLLTMQGDYTLKIDLTDFEKNSRFAQYKHFKVGDKKSFYELNFGEYSGTAGDSLSGTYHPEMQWWASHQRMKFSTRDRDNDNYKGNCAEEEQSGWWFNRCHSANLNGVYYQGPYTAETDNGVVWYTWHGWWYSLKSVVMKIRPNDFIPNVI.

The signal sequence occupies residues 1–22 (MGEIRSFLLVTIALMMGREIWA). The stretch at 25–59 (NSKCLLEQERLRAQVQQLETRVKQQQARIAQLMHE) forms a coiled coil. Positions 76-308 (LGGKRQYADC…SVVMKIRPND (233 aa)) constitute a Fibrinogen C-terminal domain. Intrachain disulfides connect C85-C114 and C250-C263.

In terms of assembly, homodimer. Interacts (via the Fibrinogen C-terminal domain) with LAG3 (via Ig-like domains 1 and 2).

Its subcellular location is the secreted. Its function is as follows. Immune suppressive molecule that inhibits antigen-specific T-cell activation by acting as a major ligand of LAG3. Responsible for LAG3 T-cell inhibitory function. Binds LAG3 independently from MHC class II (MHC-II). Secreted by, and promotes growth of, hepatocytes. The chain is Fibrinogen-like protein 1 from Mesocricetus auratus (Golden hamster).